Here is a 207-residue protein sequence, read N- to C-terminus: Dephospho-CoA kinase (207 aa).

One can recognise a DPCK domain in the interval 5-203 (AVGLTGGVAC…ARYRALASVF (199 aa)). 13-18 (ACGKSL) contributes to the ATP binding site.

Belongs to the CoaE family.

It is found in the cytoplasm. The catalysed reaction is 3'-dephospho-CoA + ATP = ADP + CoA + H(+). Its pathway is cofactor biosynthesis; coenzyme A biosynthesis; CoA from (R)-pantothenate: step 5/5. In terms of biological role, catalyzes the phosphorylation of the 3'-hydroxyl group of dephosphocoenzyme A to form coenzyme A. In Xylella fastidiosa (strain Temecula1 / ATCC 700964), this protein is Dephospho-CoA kinase.